The primary structure comprises 635 residues: Factor of DNA methylation 2 (635 aa).

Residues 289–471 (LDEKKNLHQA…ESMNSVLMTK (183 aa)) are a coiled coil. Residues 350–365 (ELERQKLDEDKRKSDA) show a composition bias toward basic and acidic residues. A disordered region spans residues 350 to 376 (ELERQKLDEDKRKSDAMNKSLQLASRE).

Forms a complex with IDN2 and FMD1/INDL1. As to expression, highly expressed in flowers and at lower levels in roots, leaves and stems.

Its function is as follows. Forms a complex with IDN2 and FDM1/IDNL1 that is required for RNA-directed DNA methylation (RdDM) and that functions at a downstream step of the RdDM pathway. This chain is Factor of DNA methylation 2, found in Arabidopsis thaliana (Mouse-ear cress).